The chain runs to 278 residues: Gap junction delta-3 protein (278 aa).

At 1–24 (MGEWAFLGSLLDAVQLQSPLVGRL) the chain is on the cytoplasmic side. A helical transmembrane segment spans residues 25–45 (WLVIMLIFRILVLATVGGAVF). Residues 46-76 (EDEQEEFVCNTLQPGCRQTCYDRAFPVSHYR) lie on the Extracellular side of the membrane. Residues 77–97 (FWLFHILLLSAPPVLFVIYSM) traverse the membrane as a helical segment. Residues 98 to 136 (HQASKEAGGAQLAPPCARGRAEAPCSPCALRARRARRCY) lie on the Cytoplasmic side of the membrane. Residues 137–157 (LLSVALRLLAELAFLGGQALL) form a helical membrane-spanning segment. The Extracellular portion of the chain corresponds to 158-188 (YGFRVDPHYACAGPPCPHTVDCFVSRPTEKT). The helical transmembrane segment at 189-209 (VFVVFYFAVGLLSALLSVAEL) threads the bilayer. At 210–278 (GHLLWKGRQR…LATVRQDLAI (69 aa)) the chain is on the cytoplasmic side. Positions 223–278 (LPPPPPSPSLPSQRGDPDPFGPPAYAHRSPAGDSEGEGGSGHSKASLATVRQDLAI) are disordered.

This sequence belongs to the connexin family. Delta-type subfamily. As to quaternary structure, a connexon is composed of a hexamer of connexins.

It is found in the cell membrane. Its subcellular location is the cell junction. It localises to the gap junction. Its function is as follows. One gap junction consists of a cluster of closely packed pairs of transmembrane channels, the connexons, through which materials of low MW diffuse from one cell to a neighboring cell. The sequence is that of Gap junction delta-3 protein (Gjd3) from Mus musculus (Mouse).